We begin with the raw amino-acid sequence, 88 residues long: Small ribosomal subunit protein bS20 (88 aa).

This sequence belongs to the bacterial ribosomal protein bS20 family.

Functionally, binds directly to 16S ribosomal RNA. The sequence is that of Small ribosomal subunit protein bS20 from Syntrophomonas wolfei subsp. wolfei (strain DSM 2245B / Goettingen).